A 254-amino-acid chain; its full sequence is Large ribosomal subunit protein uL2B (254 aa).

Residue Lys-46 forms a Glycyl lysine isopeptide (Lys-Gly) (interchain with G-Cter in ubiquitin) linkage. A Phosphoserine modification is found at Ser-52. A Glycyl lysine isopeptide (Lys-Gly) (interchain with G-Cter in ubiquitin) cross-link involves residue Lys-93. The residue at position 95 (Ser-95) is a Phosphoserine. Residues Lys-119 and Lys-145 each participate in a glycyl lysine isopeptide (Lys-Gly) (interchain with G-Cter in ubiquitin) cross-link. Phosphoserine occurs at positions 159, 160, and 249.

It belongs to the universal ribosomal protein uL2 family. In terms of assembly, component of the large ribosomal subunit (LSU). Mature yeast ribosomes consist of a small (40S) and a large (60S) subunit. The 40S small subunit contains 1 molecule of ribosomal RNA (18S rRNA) and 33 different proteins (encoded by 57 genes). The large 60S subunit contains 3 rRNA molecules (25S, 5.8S and 5S rRNA) and 46 different proteins (encoded by 81 genes).

Its subcellular location is the cytoplasm. Functionally, component of the ribosome, a large ribonucleoprotein complex responsible for the synthesis of proteins in the cell. The small ribosomal subunit (SSU) binds messenger RNAs (mRNAs) and translates the encoded message by selecting cognate aminoacyl-transfer RNA (tRNA) molecules. The large subunit (LSU) contains the ribosomal catalytic site termed the peptidyl transferase center (PTC), which catalyzes the formation of peptide bonds, thereby polymerizing the amino acids delivered by tRNAs into a polypeptide chain. The nascent polypeptides leave the ribosome through a tunnel in the LSU and interact with protein factors that function in enzymatic processing, targeting, and the membrane insertion of nascent chains at the exit of the ribosomal tunnel. This chain is Large ribosomal subunit protein uL2B, found in Saccharomyces cerevisiae (strain ATCC 204508 / S288c) (Baker's yeast).